We begin with the raw amino-acid sequence, 104 residues long: uncharacterized protein (104 aa).

2 helical membrane passes run 53 to 73 (IWGI…NWDF) and 74 to 94 (ILNL…LILI).

It is found in the cell membrane. This is an uncharacterized protein from Methanocaldococcus jannaschii (strain ATCC 43067 / DSM 2661 / JAL-1 / JCM 10045 / NBRC 100440) (Methanococcus jannaschii).